Reading from the N-terminus, the 541-residue chain is Glucose-6-phosphate isomerase (541 aa).

Residue Glu-346 is the Proton donor of the active site. Active-site residues include His-377 and Lys-506.

The protein belongs to the GPI family.

It localises to the cytoplasm. The enzyme catalyses alpha-D-glucose 6-phosphate = beta-D-fructose 6-phosphate. It participates in carbohydrate biosynthesis; gluconeogenesis. The protein operates within carbohydrate degradation; glycolysis; D-glyceraldehyde 3-phosphate and glycerone phosphate from D-glucose: step 2/4. In terms of biological role, catalyzes the reversible isomerization of glucose-6-phosphate to fructose-6-phosphate. This is Glucose-6-phosphate isomerase from Rhizobium rhizogenes (strain K84 / ATCC BAA-868) (Agrobacterium radiobacter).